The primary structure comprises 116 residues: MQEQAQQFIFKVTDKAVEEIKKVAQENNIENPILRIRVVPGGCSGFQYAMGFDDTVEEGDHVFEYDGVKVVIDPFSMPYVNGAELDYVVDFMGGGFTIRNPNATGSCGCGSSFSCG.

Belongs to the HesB/IscA family.

The polypeptide is Protein aq_1857 (Aquifex aeolicus (strain VF5)).